Here is a 254-residue protein sequence, read N- to C-terminus: 3-deoxy-manno-octulosonate cytidylyltransferase (254 aa).

Belongs to the KdsB family.

It is found in the cytoplasm. It catalyses the reaction 3-deoxy-alpha-D-manno-oct-2-ulosonate + CTP = CMP-3-deoxy-beta-D-manno-octulosonate + diphosphate. It functions in the pathway nucleotide-sugar biosynthesis; CMP-3-deoxy-D-manno-octulosonate biosynthesis; CMP-3-deoxy-D-manno-octulosonate from 3-deoxy-D-manno-octulosonate and CTP: step 1/1. Its pathway is bacterial outer membrane biogenesis; lipopolysaccharide biosynthesis. Functionally, activates KDO (a required 8-carbon sugar) for incorporation into bacterial lipopolysaccharide in Gram-negative bacteria. This is 3-deoxy-manno-octulosonate cytidylyltransferase from Pseudoalteromonas atlantica (strain T6c / ATCC BAA-1087).